Consider the following 289-residue polypeptide: Bifunctional protein FolD (289 aa).

NADP(+)-binding positions include 166-168 (GRS), Ser191, and Ile232.

It belongs to the tetrahydrofolate dehydrogenase/cyclohydrolase family. Homodimer.

It catalyses the reaction (6R)-5,10-methylene-5,6,7,8-tetrahydrofolate + NADP(+) = (6R)-5,10-methenyltetrahydrofolate + NADPH. The enzyme catalyses (6R)-5,10-methenyltetrahydrofolate + H2O = (6R)-10-formyltetrahydrofolate + H(+). It participates in one-carbon metabolism; tetrahydrofolate interconversion. Catalyzes the oxidation of 5,10-methylenetetrahydrofolate to 5,10-methenyltetrahydrofolate and then the hydrolysis of 5,10-methenyltetrahydrofolate to 10-formyltetrahydrofolate. In Synechococcus sp. (strain JA-3-3Ab) (Cyanobacteria bacterium Yellowstone A-Prime), this protein is Bifunctional protein FolD.